We begin with the raw amino-acid sequence, 545 residues long: Solute carrier family 22 member 6 (545 aa).

Residues 1–9 are Cytoplasmic-facing; it reads MAFNDLLKQ. Residues 10–30 traverse the membrane as a helical segment; that stretch reads VGGVGRFQLIQVTMVVAPLLL. The Extracellular segment spans residues 31–129; the sequence is MASHNTLQNF…LVCSHRAFRQ (99 aa). Residues Asn39, Asn56, Asn86, Asn91, and Asn107 are each glycosylated (N-linked (GlcNAc...) asparagine). The helical transmembrane segment at 130 to 150 threads the bilayer; it reads LAQSLFMVGVLLGAMMFGYLA. The Cytoplasmic segment spans residues 151 to 157; the sequence is DRLGRRK. Residues 158–177 traverse the membrane as a helical segment; the sequence is VLILNYLQTAVSGTCAAYAP. An N-linked (GlcNAc...) asparagine glycan is attached at Asn178. At 178-180 the chain is on the extracellular side; the sequence is NYT. A helical membrane pass occupies residues 181 to 201; that stretch reads VYCIFRLLSGMSLASIAINCM. At 202–218 the chain is on the cytoplasmic side; the sequence is TLNMEWMPIHTRAYVGT. A helical transmembrane segment spans residues 219–239; it reads LIGYVYSLGQFLLAGIAYAVP. Topologically, residues 240–242 are extracellular; that stretch reads HWR. A helical transmembrane segment spans residues 243–263; that stretch reads HLQLAVSVPFFVAFIYSWFFI. At 264 to 331 the chain is on the cytoplasmic side; that stretch reads ESARWYSSSG…ELLRCPTLRR (68 aa). Residues 332–352 form a helical membrane-spanning segment; that stretch reads LFLCLSMLWFATSFAYYGLVM. The Extracellular portion of the chain corresponds to 353 to 362; that stretch reads DLQGFGVSMY. A helical transmembrane segment spans residues 363–383; sequence LIQVIFGAVDLPAKFVCFLVI. Topologically, residues 384 to 389 are cytoplasmic; that stretch reads NSMGRR. A helical membrane pass occupies residues 390–410; it reads PAQLASLLLAGICILVNGIIP. Over 411–419 the chain is Extracellular; the sequence is RGHTIIRTS. The chain crosses the membrane as a helical span at residues 420 to 440; sequence LAVLGKGCLASSFNCIFLYTG. Residues 441-450 lie on the Cytoplasmic side of the membrane; it reads ELYPTMIRQT. Residues 451–471 traverse the membrane as a helical segment; that stretch reads GLGMGSTMARVGSIVSPLISM. The Extracellular portion of the chain corresponds to 472–478; the sequence is TAEFYPS. Residues 479–499 traverse the membrane as a helical segment; sequence IPLFIFGAVPVAASAVTALLP. Topologically, residues 500-545 are cytoplasmic; that stretch reads ETLGQPLPDTVQDLKSRSRGKQKQQQLEQQKQMIPLQVSTQEKNGL. The interval 515–545 is disordered; sequence SRSRGKQKQQQLEQQKQMIPLQVSTQEKNGL. The span at 522 to 531 shows a compositional bias: low complexity; sequence KQQQLEQQKQ. Residues 536-545 show a composition bias toward polar residues; that stretch reads QVSTQEKNGL.

It belongs to the major facilitator (TC 2.A.1) superfamily. Organic cation transporter (TC 2.A.1.19) family. Glycosylated. Glycosylation is necessary for proper targeting of the transporter to the plasma membrane. In terms of tissue distribution, expressed in kidney. In kidney, restricted to the proximal convoluted tubule (representing S1 and S2 segments). In brain, expressed in neurons of the cortex cerebri and hippocampus as well as in the ependymal cell layer of the choroid plexus.

It is found in the basolateral cell membrane. The protein localises to the basal cell membrane. It catalyses the reaction (6R)-L-erythro-5,6,7,8-tetrahydrobiopterin(out) + a dicarboxylate(in) = (6R)-L-erythro-5,6,7,8-tetrahydrobiopterin(in) + a dicarboxylate(out). It carries out the reaction L-erythro-7,8-dihydrobiopterin(out) + a dicarboxylate(in) = L-erythro-7,8-dihydrobiopterin(in) + a dicarboxylate(out). The enzyme catalyses L-sepiapterin(out) + a dicarboxylate(in) = L-sepiapterin(in) + a dicarboxylate(out). The catalysed reaction is prostaglandin F2alpha(out) + a dicarboxylate(in) = prostaglandin F2alpha(in) + a dicarboxylate(out). It catalyses the reaction prostaglandin E2(out) + a dicarboxylate(in) = prostaglandin E2(in) + a dicarboxylate(out). It carries out the reaction 3',5'-cyclic AMP(out) + a dicarboxylate(in) = 3',5'-cyclic AMP(in) + a dicarboxylate(out). The enzyme catalyses 3',5'-cyclic GMP(out) + a dicarboxylate(in) = 3',5'-cyclic GMP(in) + a dicarboxylate(out). The catalysed reaction is urate(out) + a dicarboxylate(in) = urate(in) + a dicarboxylate(out). It catalyses the reaction kynurenate(out) + glutarate(in) = kynurenate(in) + glutarate(out). It carries out the reaction (indol-3-yl)acetate(out) + a dicarboxylate(in) = (indol-3-yl)acetate(in) + a dicarboxylate(out). The enzyme catalyses indoxyl sulfate(out) + a dicarboxylate(in) = indoxyl sulfate(in) + a dicarboxylate(out). The catalysed reaction is N-benzoylglycine(out) + a dicarboxylate(in) = N-benzoylglycine(in) + a dicarboxylate(out). It catalyses the reaction 3-carboxy-4-methyl-5-propyl-2-furanpropanoate(out) + a dicarboxylate(in) = 3-carboxy-4-methyl-5-propyl-2-furanpropanoate(in) + a dicarboxylate(out). Secondary active transporter that functions as a Na(+)-independent organic anion (OA)/dicarboxylate antiporter where the uptake of one molecule of OA into the cell is coupled with an efflux of one molecule of intracellular dicarboxylate such as 2-oxoglutarate or glutarate. Mediates the uptake of OA across the basolateral side of proximal tubule epithelial cells, thereby contributing to the renal elimination of endogenous OA from the systemic circulation into the urine. Functions as a biopterin transporters involved in the uptake and the secretion of coenzymes tetrahydrobiopterin (BH4), dihydrobiopterin (BH2) and sepiapterin to urine, thereby determining baseline levels of blood biopterins. Transports prostaglandin E2 (PGE2) and prostaglandin F2-alpha (PGF2-alpha) and may contribute to their renal excretion. Involved in the transport of neuroactive tryptophan metabolites kynurenate (KYNA) and xanthurenate (XA). May transport glutamate. Also involved in the disposition of uremic toxins and potentially toxic xenobiotics by the renal organic anion secretory pathway, helping reduce their undesired toxicological effects on the body. Uremic toxins include the indoxyl sulfate (IS), hippurate/N-benzoylglycine (HA), indole acetate (IA) and 3-carboxy-4- methyl-5-propyl-2-furanpropionate(CMPF) and urate. Xenobiotics include the mycotoxin ochratoxin (OTA). May also contribute to the transport of organic compounds in testes across the blood-testis-barrier. The chain is Solute carrier family 22 member 6 from Mus musculus (Mouse).